The sequence spans 156 residues: Terrestric acid biosynthesis cluster protein E (156 aa).

The protein operates within secondary metabolite biosynthesis. Functionally, part of the tra gene cluster that produces terrestric acid. The clavatol biosynthesis cluster cla and the terrestric acid cluster tra are both involved in the production of peniphenones and penilactones. The non-reducing PKS claF is responsible for the formation of clavatol from successive condensations of 3 malonyl-CoA units, presumably with a simple acetyl-CoA starter unit, and 2 methylation steps. The esterase claE probably collaborates with claF by catalyzing the hydrolysis of ACP-bound acyl intermediates to free the ACP from stalled intermediates. The clavatol oxidase claD then converts clavatol to hydroxyclavatol. Spontaneous dehydration of hydroxyclavatol leads to the accumulation of the highly active ortho-quinone methide. On the other hand, the PKS-NRPS hybrid traA is involved in the formation of crustosic acid, with the help of traB and traD. The polyketide synthase module (PKS) of traA is responsible for the synthesis of the polyketide backbone via the condensation of an acetyl-CoA starter unit with 3 malonyl-CoA units. The downstream nonribosomal peptide synthetase (NRPS) module then amidates the carboxyl end of the polyketide with L-malic acid. Because traA lacks a designated enoylreductase (ER) domain, the required activity is provided the enoyl reductase traG. Crustosic acid undergoes decarboxylation and isomerization to the terrestric acid, catalyzed by the 2-oxoglutarate-dependent dioxygenase traH. Both acids are further converted to the 2 gamma-butyrolactones (R)-5-methyltetronic acid and (S)-5-carboxylmethyltetronic acid, with involvement of the cytochrome P450 monooxygenase claJ. Spontaneous addition of the methide to these gamma-butyrolactones leads to peniphenone D and penilactone D, which undergo again stereospecific attacking by methide to give penilactones A and B. TraE seems not to be involved in the biosynthesis of peniphenones and penilactones in the conditions used to study its function. This chain is Terrestric acid biosynthesis cluster protein E, found in Penicillium crustosum (Blue mold fungus).